The chain runs to 370 residues: Doublesex- and mab-3-related transcription factor C2 (370 aa).

The interval 1 to 38 is disordered; it reads MDPSETAALHHCSADSSPADEARVPQSTELIPRRPVSR. Positions 42-89 form a DNA-binding region, DM; sequence CARCRNHGVTAHLKGHKRLCLFQACECHKCVLILERRRVMAAQVALRR. The interval 334–356 is disordered; the sequence is APPGGRGFQPVGPPLRPSPGSSV.

It belongs to the DMRT family. Expressed in testis. Highly expressed in ovary.

The protein localises to the nucleus. May be involved in sexual development. In Mus musculus (Mouse), this protein is Doublesex- and mab-3-related transcription factor C2 (Dmrtc2).